The primary structure comprises 336 residues: Glycerol-3-phosphate dehydrogenase [NAD(P)+] (336 aa).

Residues S16, Y17, H37, and K111 each coordinate NADPH. Residues K111, G140, and T142 each contribute to the sn-glycerol 3-phosphate site. A144 is an NADPH binding site. Sn-glycerol 3-phosphate is bound by residues K196, D249, S259, R260, and N261. The active-site Proton acceptor is K196. R260 contacts NADPH. Positions 284 and 286 each coordinate NADPH.

Belongs to the NAD-dependent glycerol-3-phosphate dehydrogenase family.

It localises to the cytoplasm. It carries out the reaction sn-glycerol 3-phosphate + NAD(+) = dihydroxyacetone phosphate + NADH + H(+). The catalysed reaction is sn-glycerol 3-phosphate + NADP(+) = dihydroxyacetone phosphate + NADPH + H(+). It functions in the pathway membrane lipid metabolism; glycerophospholipid metabolism. In terms of biological role, catalyzes the reduction of the glycolytic intermediate dihydroxyacetone phosphate (DHAP) to sn-glycerol 3-phosphate (G3P), the key precursor for phospholipid synthesis. This is Glycerol-3-phosphate dehydrogenase [NAD(P)+] from Actinobacillus pleuropneumoniae serotype 3 (strain JL03).